Here is a 94-residue protein sequence, read N- to C-terminus: PqqA binding protein (94 aa).

This sequence belongs to the PqqD family. As to quaternary structure, monomer. Interacts with PqqE.

The protein operates within cofactor biosynthesis; pyrroloquinoline quinone biosynthesis. Its function is as follows. Functions as a PqqA binding protein and presents PqqA to PqqE, in the pyrroloquinoline quinone (PQQ) biosynthetic pathway. In Acinetobacter baumannii (strain AB307-0294), this protein is PqqA binding protein.